A 120-amino-acid chain; its full sequence is Large ribosomal subunit protein uL22 (120 aa).

The protein belongs to the universal ribosomal protein uL22 family. In terms of assembly, part of the 50S ribosomal subunit.

In terms of biological role, this protein binds specifically to 23S rRNA; its binding is stimulated by other ribosomal proteins, e.g. L4, L17, and L20. It is important during the early stages of 50S assembly. It makes multiple contacts with different domains of the 23S rRNA in the assembled 50S subunit and ribosome. The globular domain of the protein is located near the polypeptide exit tunnel on the outside of the subunit, while an extended beta-hairpin is found that lines the wall of the exit tunnel in the center of the 70S ribosome. In Corynebacterium glutamicum (strain R), this protein is Large ribosomal subunit protein uL22.